The following is a 486-amino-acid chain: Pup--protein ligase (486 aa).

Position 33 (E33) interacts with Mg(2+). R76 lines the ATP pocket. Position 78 (Y78) interacts with Mg(2+). Residue D80 is the Proton acceptor of the active site. Residue E86 coordinates Mg(2+). Positions 89 and 451 each coordinate ATP.

Belongs to the Pup ligase/Pup deamidase family. Pup-conjugating enzyme subfamily.

The catalysed reaction is ATP + [prokaryotic ubiquitin-like protein]-L-glutamate + [protein]-L-lysine = ADP + phosphate + N(6)-([prokaryotic ubiquitin-like protein]-gamma-L-glutamyl)-[protein]-L-lysine.. The protein operates within protein degradation; proteasomal Pup-dependent pathway. It functions in the pathway protein modification; protein pupylation. In terms of biological role, catalyzes the covalent attachment of the prokaryotic ubiquitin-like protein modifier Pup to the proteasomal substrate proteins, thereby targeting them for proteasomal degradation. This tagging system is termed pupylation. The ligation reaction involves the side-chain carboxylate of the C-terminal glutamate of Pup and the side-chain amino group of a substrate lysine. This Bifidobacterium longum (strain DJO10A) protein is Pup--protein ligase.